A 1108-amino-acid chain; its full sequence is cGMP-inhibited 3',5'-cyclic phosphodiesterase 3B (1108 aa).

Residues 1–11 (MRKDERERDTP) show a composition bias toward basic and acidic residues. The segment at 1–32 (MRKDERERDTPAMRSPPPPPPPATATAASPPE) is disordered. Residues 1-32 (MRKDERERDTPAMRSPPPPPPPATATAASPPE) are interaction with RAPGEF3. The segment covering 14–23 (RSPPPPPPPA) has biased composition (pro residues). The residue at position 15 (serine 15) is a Phosphoserine. 6 helical membrane passes run 73–93 (AGAR…LLGA), 114–134 (LSLS…CFLT), 144–164 (AGSW…FAAW), 175–195 (AAAA…LTLA), 204–224 (VLVL…LGAL), and 231–251 (LLSC…DHFF). Position 279 is a phosphoserine; by PKB/AKT1 or PKB/AKT2 (serine 279). Residues serine 280 and serine 427 each carry the phosphoserine modification. The segment at 405–448 (DRKLHKGLSSKPSFPTAQLRRSSGASGLLTSEHHSRWDRSGGKR) is disordered. Positions 414–433 (SKPSFPTAQLRRSSGASGLL) are enriched in polar residues. Positions 421–445 (AQLRRSSGASGLLTSEHHSRWDRSG) are interaction with PIK3R6. Residues 435 to 445 (SEHHSRWDRSG) show a composition bias toward basic and acidic residues. The region spanning 633 to 1070 (PNIDQEVLLD…KIWKEIIEEE (438 aa)) is the PDEase domain. Histidine 719 (proton donor) is an active-site residue. Histidine 719 contacts AMP. 4 residues coordinate Mg(2+): histidine 723, histidine 803, aspartate 804, and aspartate 919. Residues aspartate 804, aspartate 919, and glutamine 970 each coordinate AMP. Over residues 999-1033 (EEGDDTESDDDDDDDDDDDDDDDEELDSDDEETED) the composition is skewed to acidic residues. The interval 999-1042 (EEGDDTESDDDDDDDDDDDDDDDEELDSDDEETEDNLNPKPQRR) is disordered.

Belongs to the cyclic nucleotide phosphodiesterase family. PDE3 subfamily. As to quaternary structure, homodimer. Interacts with PIK3CG; regulates PDE3B activity and thereby cAMP levels in cells. Interacts with RAPGEF3 and PIK3R6; form a signaling complex that regulates phosphatidylinositol 3-kinase gamma in angiogenesis. Interacts with ABHD15; this interaction regulates PDE3B's stability and expression and, thereby, impacts the antilipolytic action of insulin. The cofactor is Mg(2+). Mn(2+) serves as cofactor. In terms of processing, phosphorylation at Ser-279 mediates insulin-induced activation of PDE3B. As to expression, abundant in adipose tissues.

The protein localises to the membrane. It carries out the reaction a nucleoside 3',5'-cyclic phosphate + H2O = a nucleoside 5'-phosphate + H(+). The enzyme catalyses 3',5'-cyclic AMP + H2O = AMP + H(+). It catalyses the reaction 3',5'-cyclic GMP + H2O = GMP + H(+). Inhibited by cGMP. Functionally, cyclic nucleotide phosphodiesterase with a dual-specificity for the second messengers cAMP and cGMP, which are key regulators of many important physiological processes. Regulates angiogenesis by inhibiting the cAMP-dependent guanine nucleotide exchange factor RAPGEF3 and downstream phosphatidylinositol 3-kinase gamma-mediated signaling. Controls cardiac contractility by reducing cAMP concentration in cardiocytes. This Rattus norvegicus (Rat) protein is cGMP-inhibited 3',5'-cyclic phosphodiesterase 3B.